We begin with the raw amino-acid sequence, 109 residues long: Spermidine export protein MdtI (109 aa).

4 helical membrane-spanning segments follow: residues 6–26, 36–56, 64–84, and 88–108; these read WVHA…NVFL, IFGL…SQAV, AYAL…WILF, and LNRK…MVKL.

This sequence belongs to the drug/metabolite transporter (DMT) superfamily. Small multidrug resistance (SMR) (TC 2.A.7.1) family. MdtI subfamily. As to quaternary structure, forms a complex with MdtJ.

The protein resides in the cell inner membrane. Functionally, catalyzes the excretion of spermidine. The sequence is that of Spermidine export protein MdtI from Escherichia coli O139:H28 (strain E24377A / ETEC).